The following is a 172-amino-acid chain: Adenine phosphoribosyltransferase (172 aa).

The protein belongs to the purine/pyrimidine phosphoribosyltransferase family. Homodimer.

Its subcellular location is the cytoplasm. It carries out the reaction AMP + diphosphate = 5-phospho-alpha-D-ribose 1-diphosphate + adenine. It functions in the pathway purine metabolism; AMP biosynthesis via salvage pathway; AMP from adenine: step 1/1. Functionally, catalyzes a salvage reaction resulting in the formation of AMP, that is energically less costly than de novo synthesis. This chain is Adenine phosphoribosyltransferase, found in Clostridium beijerinckii (strain ATCC 51743 / NCIMB 8052) (Clostridium acetobutylicum).